The chain runs to 219 residues: Salivary IL-4-inducing protein (219 aa).

An N-terminal signal peptide occupies residues 1–19; sequence MKYLLTLLMALSLVNLMLT. The disordered stretch occupies residues 19 to 109; the sequence is TRPTPEDDGG…KNDPRETYNK (91 aa). Over residues 30 to 43 the composition is skewed to low complexity; sequence SEEPQTQETTGETT. A compositionally biased stretch (basic and acidic residues) spans 72 to 107; the sequence is DDTAKKEDDGESKDGEGSEKSDKEKGEPKNDPRETY.

In terms of tissue distribution, salivary gland (at protein level).

The protein resides in the secreted. Functionally, induces expression of IL4 in host skin by diverting host CD4 cells away from Th1 and towards Th2 responsiveness. Induces expression of IL10 in host skin. Down-regulates expression of IL12B, IFN-gamma (IFNG) and TNF-alpha (TNF) in host skin. The protein is Salivary IL-4-inducing protein of Aedes aegypti (Yellowfever mosquito).